Consider the following 795-residue polypeptide: Glycerol-3-phosphate acyltransferase 2, mitochondrial (795 aa).

Positions 1–21 (MATMLEGRCQTQPRSSPSGRE) are disordered. Residues 1 to 305 (MATMLEGRCQ…LGPRLSALGQ (305 aa)) are Cytoplasmic-facing. Polar residues predominate over residues 9–18 (CQTQPRSSPS). The segment at 180 to 331 (QLHKGQMKMV…DALLVPVAVT (152 aa)) is acyltransferase. An HXXXXD motif motif is present at residues 205 to 210 (HKTLLD). Residues 306-332 (AWVGFVVQAVQVGIVPDALLVPVAVTY) traverse the membrane as a helical segment. At 333-449 (DLVPDAPCDI…QLLVRRLSCH (117 aa)) the chain is on the mitochondrial intermembrane side. The chain crosses the membrane as a helical span at residues 450–472 (VLSASVGSSAVMSTAIMATLLLF). The Cytoplasmic segment spans residues 473–795 (KHQKLLGEFS…EQFIRQFICS (323 aa)). The residue at position 656 (Ser656) is a Phosphoserine. Phosphothreonine is present on Thr660. Residues Ser662 and Ser664 each carry the phosphoserine modification.

The protein belongs to the GPAT/DAPAT family. As to quaternary structure, interacts with PIWIL2.

Its subcellular location is the mitochondrion outer membrane. The catalysed reaction is sn-glycerol 3-phosphate + an acyl-CoA = a 1-acyl-sn-glycero-3-phosphate + CoA. It carries out the reaction a 1-acyl-sn-glycero-3-phosphate + an acyl-CoA = a 1,2-diacyl-sn-glycero-3-phosphate + CoA. It catalyses the reaction 1-(9Z-octadecenoyl)-sn-glycero-3-phosphate + (9Z)-octadecenoyl-CoA = 1,2-di-(9Z-octadecenoyl)-sn-glycero-3-phosphate + CoA. The enzyme catalyses 1-(9Z-octadecenoyl)-sn-glycero-3-phosphate + (5Z,8Z,11Z,14Z)-eicosatetraenoyl-CoA = 1-(9Z)-octadecenoyl-2-(5Z,8Z,11Z,14Z)-eicosatetraenoyl-sn-glycero-3-phosphate + CoA. The catalysed reaction is (5Z,8Z,11Z,14Z)-eicosatetraenoyl-CoA + sn-glycerol 3-phosphate = 1-(5Z,8Z,11Z,14Z-eicosatetraenoyl)-sn-glycero-3-phosphate + CoA. The protein operates within phospholipid metabolism; CDP-diacylglycerol biosynthesis; CDP-diacylglycerol from sn-glycerol 3-phosphate: step 1/3. Inhibited by N-ethylmaleimide (NEM). Its function is as follows. Transfers an acyl-group from acyl-ACP to the sn-1 position of glycerol-3-phosphate producing a lysophosphatidic acid (LPA), an essential step for the triacylglycerol (TAG) and glycerophospholipids. In vitro also transfers an acyl-group from acyl-ACP to the LPA producing a phosphatidic acid (PA). Prefers arachidonoyl-CoA as the acyl donor. Required for primary processing step during piRNA biosynthesis. Molecular mechanisms by which it promotes piRNA biosynthesis are unclear and do not involve its acyltransferase activity. The chain is Glycerol-3-phosphate acyltransferase 2, mitochondrial from Homo sapiens (Human).